The primary structure comprises 309 residues: Homoserine kinase (309 aa).

91–101 is a binding site for ATP; the sequence is PIGSGLGSSAC.

This sequence belongs to the GHMP kinase family. Homoserine kinase subfamily.

Its subcellular location is the cytoplasm. The enzyme catalyses L-homoserine + ATP = O-phospho-L-homoserine + ADP + H(+). The protein operates within amino-acid biosynthesis; L-threonine biosynthesis; L-threonine from L-aspartate: step 4/5. Functionally, catalyzes the ATP-dependent phosphorylation of L-homoserine to L-homoserine phosphate. The chain is Homoserine kinase from Salmonella paratyphi B (strain ATCC BAA-1250 / SPB7).